The sequence spans 374 residues: MRSERLRWLVAAEGPFASVYFDDSHDTLDAVERREATWRDVRKHLESRDAKQELIDSLEEAVRDSRPAVGQRGRALIATGEQVLVNEHLIGPPPATVIRLSDYPYVVPLIDLEMRRPTYVFAAVDHTGADVKLYQGATISSTKIDGVGYPVHKPVTAGWNGYGDFQHTTEEAIRMNCRAVADHLTRLVDAADPEVVFVSGEVRSRTDLLSTLPQRVAVRVSQLHAGPRKSALDEEEIWDLTSAEFTRRRYAEITNVAQQFEAEIGRGSGLAAQGLAEVCAALRDGDVDTLIVGELGEATVVTGKARTTVARDADMLSELGEPVDRVARADEALPFAAIAVGAALVRDDNRIAPLDGVGALLRYAATNRLGSHRS.

Positions 39-66 (RDVRKHLESRDAKQELIDSLEEAVRDSR) form a coiled coil.

This is an uncharacterized protein from Mycobacterium tuberculosis (strain CDC 1551 / Oshkosh).